The following is a 287-amino-acid chain: Rhodopsin (287 aa).

Over 1-5 (VNGAA) the chain is Extracellular. The chain crosses the membrane as a helical span at residues 6-30 (YAGLCAYMFLLILVGFPVNFLTLYV). Over 31–42 (TLEHKKLRTPLN) the chain is Cytoplasmic. Residues 43–65 (YILLNLAVADLFMVLGGFTTTMY) form a helical membrane-spanning segment. Residues 66–79 (TSAHGYFVLGRLGC) are Extracellular-facing. Cys-79 and Cys-156 are joined by a disulfide. The chain crosses the membrane as a helical span at residues 80–102 (NVEGFFATLGGEIALWSLVVLAV). The 'Ionic lock' involved in activated form stabilization motif lies at 103-105 (ERW). The Cytoplasmic segment spans residues 103–121 (ERWIVVCKPISNFRFTEEH). The helical transmembrane segment at 122–142 (AIMGLGFNWVMASACAVPPLV) threads the bilayer. The Extracellular segment spans residues 143–171 (GWSRYIPEGMQCSCGINYYTRSEGFNNES). Asn-169 is a glycosylation site (N-linked (GlcNAc...) asparagine). Residues 172–193 (LVMKMLICHFLIPLFVIFFCYG) traverse the membrane as a helical segment. The Cytoplasmic segment spans residues 194-221 (RMLCAVKEAAAAQQESETTQRAEREVSR). Residues 222 to 243 (MVVIMVISFLVCWLPYASVAWY) form a helical membrane-spanning segment. Over 244–255 (IFCNQGSEFGPV) the chain is Extracellular. A helical membrane pass occupies residues 256–277 (FMTLPAFFAKSASIYNPLIYIC). N6-(retinylidene)lysine is present on Lys-265. At 278–287 (MNKHSRHCMI) the chain is on the cytoplasmic side.

This sequence belongs to the G-protein coupled receptor 1 family. Opsin subfamily. Post-translationally, phosphorylated on some or all of the serine and threonine residues present in the C-terminal region. In terms of processing, contains one covalently linked retinal chromophore.

It is found in the membrane. It localises to the cell projection. Its subcellular location is the cilium. The protein resides in the photoreceptor outer segment. Functionally, photoreceptor required for image-forming vision at low light intensity. While most salt water fish species use retinal as chromophore, most freshwater fish use 3-dehydroretinal, or a mixture of retinal and 3-dehydroretinal. Light-induced isomerization of 11-cis to all-trans retinal triggers a conformational change that activates signaling via G-proteins. Subsequent receptor phosphorylation mediates displacement of the bound G-protein alpha subunit by arrestin and terminates signaling. The polypeptide is Rhodopsin (rho) (Taurulus bubalis (Long-spined sea scorpion)).